The chain runs to 150 residues: Small ribosomal subunit protein uS7c (150 aa).

This sequence belongs to the universal ribosomal protein uS7 family. As to quaternary structure, part of the 30S ribosomal subunit.

It localises to the plastid. Its subcellular location is the chloroplast. Functionally, one of the primary rRNA binding proteins, it binds directly to 16S rRNA where it nucleates assembly of the head domain of the 30S subunit. In Huperzia lucidula (Shining clubmoss), this protein is Small ribosomal subunit protein uS7c (rps7).